The sequence spans 493 residues: Fizzy-related protein homolog (493 aa).

Disordered regions lie at residues 31–51, 64–88, and 105–166; these read LTPA…FIPS, INEN…GKDG, and EKVQ…SPRK. Thr32 carries the phosphothreonine modification. Over residues 32–42 the composition is skewed to polar residues; sequence TPANSPVSSPS. Ser36 is subject to Phosphoserine. Lys69 carries the post-translational modification N6-acetyllysine. Basic and acidic residues-rich tracts occupy residues 76-86 and 106-126; these read KAKDATSDNGK and KVQD…EHKG. Residues Ser133, Ser138, Ser146, and Ser151 each carry the phosphoserine modification. Positions 146–160 are enriched in polar residues; sequence SPYSLSPVSNKSQKL. The residue at position 159 (Lys159) is an N6-acetyllysine. WD repeat units follow at residues 182–222, 227–266, 269–306, 311–350, 353–395, 397–438, and 441–480; these read PELQ…VTRL, VEGD…KLSM, GHTA…LQSE, GHRQ…PVQQ, EHLA…PLQC, DTGS…QVAK, and GHSY…RSTK.

Belongs to the WD repeat CDC20/Fizzy family. The unphosphorylated form interacts with APC/C during mitosis. Interacts with NINL. Interacts (in complex with the anaphase promoting complex APC) with MAD2L2; inhibits FZR1-mediated APC/C activation. Interacts with SIRT2. Interacts with USP37. Interacts (via WD repeats) with MAK. Interacts with RBBP8/CtIP; this interaction leads to RBBP8 proteasomal degradation. Interacts with HECW2. Interacts with SASS6; the interaction is regulated by CENATAC and leads to SASS6 proteasomal degradation. Interacts (via N-terminus) with CCNF. Interacts with CDC6. Interacts with TK1 (via the KEN box). In terms of processing, acetylated. Deacetylated by SIRT2 at Lys-69 and Lys-159; deacetylation enhances the interaction of FZR1 with CDC27, leading to activation of anaphase promoting complex/cyclosome (APC/C). Post-translationally, following DNA damage, it is dephosphorylated by CDC14B in G2 phase, leading to its reassociation with the APC/C, and allowing an efficient G2 DNA damage checkpoint. Phosphorylated by MAK.

Its pathway is protein modification; protein ubiquitination. In terms of biological role, substrate-specific adapter for the anaphase promoting complex/cyclosome (APC/C) E3 ubiquitin-protein ligase complex. Associates with the APC/C in late mitosis, in replacement of CDC20, and activates the APC/C during anaphase and telophase. The APC/C remains active in degrading substrates to ensure that positive regulators of the cell cycle do not accumulate prematurely. At the G1/S transition FZR1 is phosphorylated, leading to its dissociation from the APC/C. Following DNA damage, it is required for the G2 DNA damage checkpoint: its dephosphorylation and reassociation with the APC/C leads to the ubiquitination of PLK1, preventing entry into mitosis. Acts as an adapter for APC/C to target the DNA-end resection factor RBBP8/CtIP for ubiquitination and subsequent proteasomal degradation. Through the regulation of RBBP8/CtIP protein turnover, may play a role in DNA damage response, favoring DNA double-strand repair through error-prone non-homologous end joining (NHEJ) over error-free, RBBP8-mediated homologous recombination (HR). The sequence is that of Fizzy-related protein homolog (Fzr1) from Mus musculus (Mouse).